The chain runs to 311 residues: NAD kinase (311 aa).

The active-site Proton acceptor is D89. NAD(+) contacts are provided by residues D89–G90, R94, N163–E164, D193, and T204–S209.

Belongs to the NAD kinase family. It depends on a divalent metal cation as a cofactor.

It localises to the cytoplasm. It catalyses the reaction NAD(+) + ATP = ADP + NADP(+) + H(+). Involved in the regulation of the intracellular balance of NAD and NADP, and is a key enzyme in the biosynthesis of NADP. Catalyzes specifically the phosphorylation on 2'-hydroxyl of the adenosine moiety of NAD to yield NADP. The sequence is that of NAD kinase from Mycobacterium leprae (strain Br4923).